A 385-amino-acid polypeptide reads, in one-letter code: Flap endonuclease 1 (385 aa).

Residues 1-104 (MGILGLSKLI…GELAKRAERR (104 aa)) are N-domain. Aspartate 34 is a binding site for Mg(2+). Residues arginine 47 and arginine 70 each contribute to the DNA site. Aspartate 86, glutamate 158, glutamate 160, aspartate 179, and aspartate 181 together coordinate Mg(2+). The interval 122–253 (GIEKFNRRLV…KRAIELINTY (132 aa)) is I-domain. Glutamate 158 is a DNA binding site. Glycine 231 and aspartate 233 together coordinate DNA. Residue aspartate 233 participates in Mg(2+) binding. Residues 336–344 (TQVRLDSFF) are interaction with PCNA. Residues 346–385 (TLPSTPNATNAAKRKADEAKKSANNKKAKTSGGGRGRRPK) are disordered. Basic residues predominate over residues 368-385 (ANNKKAKTSGGGRGRRPK).

This sequence belongs to the XPG/RAD2 endonuclease family. FEN1 subfamily. Interacts with PCNA. Three molecules of FEN1 bind to one PCNA trimer with each molecule binding to one PCNA monomer. PCNA stimulates the nuclease activity without altering cleavage specificity. Mg(2+) serves as cofactor. Phosphorylated. Phosphorylation upon DNA damage induces relocalization to the nuclear plasma.

It localises to the nucleus. The protein localises to the nucleolus. The protein resides in the nucleoplasm. Its subcellular location is the mitochondrion. Structure-specific nuclease with 5'-flap endonuclease and 5'-3' exonuclease activities involved in DNA replication and repair. During DNA replication, cleaves the 5'-overhanging flap structure that is generated by displacement synthesis when DNA polymerase encounters the 5'-end of a downstream Okazaki fragment. It enters the flap from the 5'-end and then tracks to cleave the flap base, leaving a nick for ligation. Also involved in the long patch base excision repair (LP-BER) pathway, by cleaving within the apurinic/apyrimidinic (AP) site-terminated flap. Acts as a genome stabilization factor that prevents flaps from equilibrating into structures that lead to duplications and deletions. Also possesses 5'-3' exonuclease activity on nicked or gapped double-stranded DNA, and exhibits RNase H activity. Also involved in replication and repair of rDNA and in repairing mitochondrial DNA. This is Flap endonuclease 1 from Drosophila sechellia (Fruit fly).